The sequence spans 831 residues: METVVNQIKSKLPENLEGLLDLAYNYWWSWNRRATKLWEKIDPEHWWEYKNPVKLLLDTPEERLKELSKDDDFINLYELVIDQFRHYMNPESTWFSTNYPKWEEPVIYLCMEYGISKSLPIYSGGLGILAGDHIKTASDLGIPLIAIGLLYKHGYFKQEIDKDGKQIEVFPEYNPEEMPIKPLTTEKGKPLLIEVPIEDRIVYARAFEVNVGRVKLYLLDTDVPQNSPDDRTICDYLYNAEIDKRIKQEILLGIGGMRLLRMLGIDPAVIHLNEGHPAFANFQRIAWYMEEGLNFLEALTVVRGTTIFTTHTPVPAGHDKFPIAEVEKRLAKFLEGLPKDEFLNLGREGDQFNMTLLSIRTSSYVNAVSKLHSKVTKEMWRHLWNGVPLDEIPVEGITNGVHTKTWLHNEIKKLVDRYIGRVWRDYAELEGLWYGVERIPDEELWEAHLKAKREFIELIKRKIKERNERLGIEEPLPEIDENALIIGFARRFATYKRATLILTDLERLKKIVNNPERPVYIIFGGKAHPRDEAGKEFLRKVYEVSQMPEFKNKIMVFENYDMGSARAMVAGVDVWLNNPRRPLEASGTSGMKAGLNGVLNLSVYDGWWVEGYNGKNGWVIGDESLEPETEKDNIRDAQSLYNLLENEVIPTYYENRARWIYMMKESIKSIAPRFSTHRMVKEYVDKFYSKALANAILLQRDSFKATREIASWKAKIFNSWDKVEIERIITHDATGVEVIVNLDGLSPEDVKVEIYYGVKAEGYAIEKPYVIELKHPQSLGGNRWLYRYEGNALKNLGHPCWHYAVRVYPYHDKLPHKFLLGLIKWKGFFEL.

Lysine 592 carries the post-translational modification N6-(pyridoxal phosphate)lysine.

The protein belongs to the glycogen phosphorylase family. Trimer (at 25 degrees Celsius). Pyridoxal 5'-phosphate is required as a cofactor.

It carries out the reaction [(1-&gt;4)-alpha-D-glucosyl](n) + phosphate = [(1-&gt;4)-alpha-D-glucosyl](n-1) + alpha-D-glucose 1-phosphate. Phosphorylase is an important allosteric enzyme in carbohydrate metabolism. Catalyzes the phospholytic cleavage of maltodextrins with a minimal chain length of five glucose residues to yield glucose-1-phosphate. Low activity with tetraose and no activity with triose and maltose. Long maltodextrins (8 to 15 glucose units), amylose and starch are not as good substrates as maltoheptaose. This Thermococcus litoralis (strain ATCC 51850 / DSM 5473 / JCM 8560 / NS-C) protein is Maltodextrin phosphorylase (malP).